We begin with the raw amino-acid sequence, 184 residues long: Nutrient stress-induced DNA-binding protein (184 aa).

The protein belongs to the Dps family. In terms of assembly, hexamer.

In terms of biological role, involved in protection of chromosomal DNA from damage under nutrient-limited and oxidative stress conditions. Binds heme. This is Nutrient stress-induced DNA-binding protein (dpsA) from Nostoc sp. (strain PCC 7120 / SAG 25.82 / UTEX 2576).